The chain runs to 578 residues: Phosphoenolpyruvate-protein phosphotransferase (578 aa).

His195 functions as the Tele-phosphohistidine intermediate in the catalytic mechanism. 2 residues coordinate phosphoenolpyruvate: Arg302 and Arg338. The Mg(2+) site is built by Glu437 and Asp461. Phosphoenolpyruvate is bound by residues 460 to 461 and Arg471; that span reads ND. The Proton donor role is filled by Cys508.

Belongs to the PEP-utilizing enzyme family. Homodimer. The cofactor is Mg(2+).

It is found in the cytoplasm. The catalysed reaction is L-histidyl-[protein] + phosphoenolpyruvate = N(pros)-phospho-L-histidyl-[protein] + pyruvate. In terms of biological role, general (non sugar-specific) component of the phosphoenolpyruvate-dependent sugar phosphotransferase system (sugar PTS). This major carbohydrate active-transport system catalyzes the phosphorylation of incoming sugar substrates concomitantly with their translocation across the cell membrane. Enzyme I transfers the phosphoryl group from phosphoenolpyruvate (PEP) to the phosphoryl carrier protein (HPr). The polypeptide is Phosphoenolpyruvate-protein phosphotransferase (ptsI) (Geobacillus stearothermophilus (Bacillus stearothermophilus)).